We begin with the raw amino-acid sequence, 110 residues long: Nucleotide-binding protein in fmt 3'region (110 aa).

8 to 15 (GLSGAGKT) is a binding site for ATP. 57–60 (DARA) provides a ligand contact to GTP.

Belongs to the RapZ-like family.

Functionally, displays ATPase and GTPase activities. This chain is Nucleotide-binding protein in fmt 3'region, found in Thermus thermophilus.